Here is a 389-residue protein sequence, read N- to C-terminus: S-adenosylmethionine synthase (389 aa).

His-17 contacts ATP. A Mg(2+)-binding site is contributed by Asp-19. Glu-45 contributes to the K(+) binding site. L-methionine-binding residues include Glu-58 and Gln-102. The flexible loop stretch occupies residues 102 to 112 (QSADIAQGVDA). Residues 167 to 169 (DAK), Asp-241, 247 to 248 (RK), Ala-264, and Lys-268 contribute to the ATP site. An L-methionine-binding site is contributed by Asp-241. L-methionine is bound at residue Lys-272.

The protein belongs to the AdoMet synthase family. Homotetramer; dimer of dimers. Requires Mg(2+) as cofactor. K(+) serves as cofactor.

Its subcellular location is the cytoplasm. The enzyme catalyses L-methionine + ATP + H2O = S-adenosyl-L-methionine + phosphate + diphosphate. Its pathway is amino-acid biosynthesis; S-adenosyl-L-methionine biosynthesis; S-adenosyl-L-methionine from L-methionine: step 1/1. Its function is as follows. Catalyzes the formation of S-adenosylmethionine (AdoMet) from methionine and ATP. The overall synthetic reaction is composed of two sequential steps, AdoMet formation and the subsequent tripolyphosphate hydrolysis which occurs prior to release of AdoMet from the enzyme. The protein is S-adenosylmethionine synthase of Parvibaculum lavamentivorans (strain DS-1 / DSM 13023 / NCIMB 13966).